Consider the following 419-residue polypeptide: Gamma-glutamyl phosphate reductase (419 aa).

This sequence belongs to the gamma-glutamyl phosphate reductase family.

Its subcellular location is the cytoplasm. The catalysed reaction is L-glutamate 5-semialdehyde + phosphate + NADP(+) = L-glutamyl 5-phosphate + NADPH + H(+). The protein operates within amino-acid biosynthesis; L-proline biosynthesis; L-glutamate 5-semialdehyde from L-glutamate: step 2/2. Functionally, catalyzes the NADPH-dependent reduction of L-glutamate 5-phosphate into L-glutamate 5-semialdehyde and phosphate. The product spontaneously undergoes cyclization to form 1-pyrroline-5-carboxylate. The protein is Gamma-glutamyl phosphate reductase of Nitratidesulfovibrio vulgaris (strain ATCC 29579 / DSM 644 / CCUG 34227 / NCIMB 8303 / VKM B-1760 / Hildenborough) (Desulfovibrio vulgaris).